We begin with the raw amino-acid sequence, 225 residues long: MADS-box transcription factor 5 (225 aa).

One can recognise an MADS-box domain in the interval methionine 1–serine 61. In terms of domain architecture, K-box spans glutamate 89–glutamate 179.

As to quaternary structure, may interact with the K-box of MADS6.

It localises to the nucleus. In terms of biological role, probable transcription factor. The polypeptide is MADS-box transcription factor 5 (MADS5) (Oryza sativa subsp. indica (Rice)).